The primary structure comprises 377 residues: Apelin receptor (377 aa).

The Extracellular segment spans residues 1-28; that stretch reads MEDDGYNYYGADNQSECDYADWTPSGAL. An N-linked (GlcNAc...) asparagine glycan is attached at Asn13. 2 disulfide bridges follow: Cys17-Cys279 and Cys100-Cys179. A helical membrane pass occupies residues 29 to 52; sequence IPAIYILVFLLGTTGNGLVLWTVF. Residues 53-62 lie on the Cytoplasmic side of the membrane; it reads WSSREKRRSA. A helical transmembrane segment spans residues 63 to 84; sequence DIFIASLAVADLTFVVTLPLWA. At 85–97 the chain is on the extracellular side; the sequence is TYTYREFDWPFGT. The chain crosses the membrane as a helical span at residues 98–123; sequence FSCKLSSYLIFVNMYASVFCLTGLSF. At 124–144 the chain is on the cytoplasmic side; sequence DRYLAIVRPVANARLRLRVSG. Residues 145-162 traverse the membrane as a helical segment; the sequence is AVATAVLWVLAALLAVPV. Over 163–196 the chain is Extracellular; it reads MVFRSTDIPENSTKTQCYMDYSMVATSNSEWAWE. A glycan (N-linked (GlcNAc...) asparagine) is linked at Asn173. The chain crosses the membrane as a helical span at residues 197–221; the sequence is VGLGVSSTAVGFVVPFIIMLTCYFF. The Cytoplasmic segment spans residues 222–244; sequence IAQTIAGHFRKERIEGLRKRRRL. Residues 245-268 form a helical membrane-spanning segment; that stretch reads LSIIVVLVVTFALCWMPYHLVKTL. Residues 269–287 lie on the Extracellular side of the membrane; it reads YMLGNLLHWPCDFDSFLMN. Residues 288-310 traverse the membrane as a helical segment; sequence VFPYCTCISYVNSCLNPFLYAFF. Residues 311 to 377 lie on the Cytoplasmic side of the membrane; sequence DPRFRRACTS…IPYSQETLVD (67 aa). Over residues 335-349 the composition is skewed to low complexity; the sequence is SSSAEKSASYSSGHS. Residues 335–377 form a disordered region; that stretch reads SSSAEKSASYSSGHSQGPGPNMCKGGEPMHEKSIPYSQETLVD.

This sequence belongs to the G-protein coupled receptor 1 family. Homodimer; dimerization inhibits APLNR-mediated G protein and beta-arrestin signaling pathways compared to monomeric APLNR. In terms of tissue distribution, widely expressed. Highest expression in the lung, lower in the heart, placenta, ovary, skeletal muscle, mammary gland, kidney and several structures in the brain as the hypothalamus (supraoptic and periventricular nuclei), pituitary, olfactory bulb and pineal gland.

It is found in the cell membrane. Its function is as follows. G protein-coupled receptor for peptide hormones apelin (APLN) and apelin receptor early endogenous ligand (APELA/ELA), that plays a role in the regulation of normal cardiovascular function and fluid homeostasis. When acting as apelin receptor, activates both G(i) protein pathway that inhibits adenylate cyclase activity, and the beta-arrestin pathway that promotes internalization of the receptor. APLNR/APJ also functions as mechanoreceptor that is activated by pathological stimuli in a G-protein-independent fashion to induce beta-arrestin signaling, hence eliciting cardiac hypertrophy. However, the presence of apelin ligand blunts cardiac hypertrophic induction from APLNR/APJ on response to pathological stimuli. Plays a key role in early development such as gastrulation, blood vessels formation and heart morphogenesis by acting as a APELA receptor. May promote angioblast migration toward the embryonic midline, i.e. the position of the future vessel formation, during vasculogenesis. Promotes sinus venosus (SV)-derived endothelial cells migration into the developing heart to promote coronary blood vessel development. Also plays a role in various processes in adults such as regulation of blood vessel formation, blood pressure, heart contractility and heart failure. In Rattus norvegicus (Rat), this protein is Apelin receptor.